Consider the following 442-residue polypeptide: Chromosomal replication initiator protein DnaA (442 aa).

The interval 1–69 is domain I, interacts with DnaA modulators; the sequence is METLWDGILS…AQAGEQVIGR (69 aa). The segment at 69–103 is domain II; sequence RPIQVDFIVSEQSEEALKPVIEREPAPAAPPANVA. The interval 104 to 320 is domain III, AAA+ region; sequence SLNSKYTFSR…GALIRAVAYV (217 aa). ATP-binding residues include G148, G150, K151, and T152. Positions 321 to 442 are domain IV, binds dsDNA; that stretch reads SISGLPMTVE…GNRLEADARH (122 aa).

The protein belongs to the DnaA family. In terms of assembly, oligomerizes as a right-handed, spiral filament on DNA at oriC.

The protein resides in the cytoplasm. In terms of biological role, plays an essential role in the initiation and regulation of chromosomal replication. ATP-DnaA binds to the origin of replication (oriC) to initiate formation of the DNA replication initiation complex once per cell cycle. Binds the DnaA box (a 9 base pair repeat at the origin) and separates the double-stranded (ds)DNA. Forms a right-handed helical filament on oriC DNA; dsDNA binds to the exterior of the filament while single-stranded (ss)DNA is stabiized in the filament's interior. The ATP-DnaA-oriC complex binds and stabilizes one strand of the AT-rich DNA unwinding element (DUE), permitting loading of DNA polymerase. After initiation quickly degrades to an ADP-DnaA complex that is not apt for DNA replication. Binds acidic phospholipids. The chain is Chromosomal replication initiator protein DnaA from Gloeobacter violaceus (strain ATCC 29082 / PCC 7421).